Reading from the N-terminus, the 176-residue chain is Phosphopantetheine adenylyltransferase (176 aa).

A substrate-binding site is contributed by threonine 11. ATP is bound by residues 11-12 (TF) and histidine 19. Substrate-binding residues include lysine 43, leucine 93, and arginine 107. ATP is bound by residues glutamate 117 and 141–147 (LSVVSSS).

The protein belongs to the bacterial CoaD family. In terms of assembly, homohexamer. Mg(2+) is required as a cofactor.

It is found in the cytoplasm. It catalyses the reaction (R)-4'-phosphopantetheine + ATP + H(+) = 3'-dephospho-CoA + diphosphate. The protein operates within cofactor biosynthesis; coenzyme A biosynthesis; CoA from (R)-pantothenate: step 4/5. Reversibly transfers an adenylyl group from ATP to 4'-phosphopantetheine, yielding dephospho-CoA (dPCoA) and pyrophosphate. In Tropheryma whipplei (strain TW08/27) (Whipple's bacillus), this protein is Phosphopantetheine adenylyltransferase.